The following is a 247-amino-acid chain: Carboxy-S-adenosyl-L-methionine synthase (247 aa).

S-adenosyl-L-methionine is bound by residues Tyr39, Gly64 to Ser66, Asp89 to Asn90, Asp117 to Ile118, Asn132, and Arg199.

It belongs to the class I-like SAM-binding methyltransferase superfamily. Cx-SAM synthase family. Homodimer.

The catalysed reaction is prephenate + S-adenosyl-L-methionine = carboxy-S-adenosyl-L-methionine + 3-phenylpyruvate + H2O. In terms of biological role, catalyzes the conversion of S-adenosyl-L-methionine (SAM) to carboxy-S-adenosyl-L-methionine (Cx-SAM). In Escherichia coli O17:K52:H18 (strain UMN026 / ExPEC), this protein is Carboxy-S-adenosyl-L-methionine synthase.